Here is a 163-residue protein sequence, read N- to C-terminus: ATP synthase subunit b 2 (163 aa).

A helical membrane pass occupies residues 5–25; that stretch reads SLATLWATIALIIFLGVAIYI.

Belongs to the ATPase B chain family. F-type ATPases have 2 components, F(1) - the catalytic core - and F(0) - the membrane proton channel. F(1) has five subunits: alpha(3), beta(3), gamma(1), delta(1), epsilon(1). F(0) has three main subunits: a(1), b(2) and c(10-14). The alpha and beta chains form an alternating ring which encloses part of the gamma chain. F(1) is attached to F(0) by a central stalk formed by the gamma and epsilon chains, while a peripheral stalk is formed by the delta and b chains.

Its subcellular location is the cell inner membrane. Its function is as follows. F(1)F(0) ATP synthase produces ATP from ADP in the presence of a proton or sodium gradient. F-type ATPases consist of two structural domains, F(1) containing the extramembraneous catalytic core and F(0) containing the membrane proton channel, linked together by a central stalk and a peripheral stalk. During catalysis, ATP synthesis in the catalytic domain of F(1) is coupled via a rotary mechanism of the central stalk subunits to proton translocation. In terms of biological role, component of the F(0) channel, it forms part of the peripheral stalk, linking F(1) to F(0). This chain is ATP synthase subunit b 2, found in Mesorhizobium japonicum (strain LMG 29417 / CECT 9101 / MAFF 303099) (Mesorhizobium loti (strain MAFF 303099)).